A 121-amino-acid chain; its full sequence is MVNLLKELEQEQCRNDLPEFHVGDTIRLATKISEGGKERVQVFQGTVMARRGGGSGETVSLHRVAYGEGMEKSFLLNSPRIVSIEIVKRGKVARARLYYLRGKTGKAAKVKEFVGPRSSKK.

This sequence belongs to the bacterial ribosomal protein bL19 family.

This protein is located at the 30S-50S ribosomal subunit interface and may play a role in the structure and function of the aminoacyl-tRNA binding site. This Chlamydia pneumoniae (Chlamydophila pneumoniae) protein is Large ribosomal subunit protein bL19 (rplS).